We begin with the raw amino-acid sequence, 287 residues long: 4-diphosphocytidyl-2-C-methyl-D-erythritol kinase (287 aa).

Residue Lys-12 is part of the active site. 95–105 (PAQAGMGGGSS) lines the ATP pocket. Residue Asp-137 is part of the active site.

This sequence belongs to the GHMP kinase family. IspE subfamily.

It carries out the reaction 4-CDP-2-C-methyl-D-erythritol + ATP = 4-CDP-2-C-methyl-D-erythritol 2-phosphate + ADP + H(+). Its pathway is isoprenoid biosynthesis; isopentenyl diphosphate biosynthesis via DXP pathway; isopentenyl diphosphate from 1-deoxy-D-xylulose 5-phosphate: step 3/6. In terms of biological role, catalyzes the phosphorylation of the position 2 hydroxy group of 4-diphosphocytidyl-2C-methyl-D-erythritol. This Delftia acidovorans (strain DSM 14801 / SPH-1) protein is 4-diphosphocytidyl-2-C-methyl-D-erythritol kinase.